A 223-amino-acid polypeptide reads, in one-letter code: NAD(P)H-hydrate epimerase (223 aa).

Positions 9 to 209 constitute a YjeF N-terminal domain; sequence MQKIDTYTVN…DIGLLTPPDF (201 aa). Residue 57-61 coordinates (6S)-NADPHX; that stretch reads NNGAD. Asn-58 and Asp-119 together coordinate K(+). (6S)-NADPHX-binding positions include 123–129 and Asp-152; that span reads GTGLNNL. Position 155 (Thr-155) interacts with K(+).

This sequence belongs to the NnrE/AIBP family. It depends on K(+) as a cofactor.

The catalysed reaction is (6R)-NADHX = (6S)-NADHX. It carries out the reaction (6R)-NADPHX = (6S)-NADPHX. Its function is as follows. Catalyzes the epimerization of the S- and R-forms of NAD(P)HX, a damaged form of NAD(P)H that is a result of enzymatic or heat-dependent hydration. This is a prerequisite for the S-specific NAD(P)H-hydrate dehydratase to allow the repair of both epimers of NAD(P)HX. The chain is NAD(P)H-hydrate epimerase from Leuconostoc gelidum subsp. gasicomitatum (strain DSM 15947 / CCUG 46042 / CECT 5767 / JCM 12535 / LMG 18811 / NBRC 113245 / TB1-10) (Leuconostoc gasicomitatum).